Consider the following 126-residue polypeptide: Large ribosomal subunit protein bL20 (126 aa).

It belongs to the bacterial ribosomal protein bL20 family.

Binds directly to 23S ribosomal RNA and is necessary for the in vitro assembly process of the 50S ribosomal subunit. It is not involved in the protein synthesizing functions of that subunit. This chain is Large ribosomal subunit protein bL20, found in Acholeplasma laidlawii (strain PG-8A).